The sequence spans 373 residues: Probable pectin lyase C (373 aa).

An N-terminal signal peptide occupies residues 1–17; the sequence is MKKYLLSLLAAVTYTTA. Disulfide bonds link Cys-78–Cys-95 and Cys-87–Cys-215. Asn-140 and Asn-229 each carry an N-linked (GlcNAc...) asparagine glycan. Residue Arg-245 is part of the active site. Cys-315 and Cys-323 form a disulfide bridge.

Belongs to the polysaccharide lyase 1 family.

It localises to the secreted. It carries out the reaction Eliminative cleavage of (1-&gt;4)-alpha-D-galacturonan methyl ester to give oligosaccharides with 4-deoxy-6-O-methyl-alpha-D-galact-4-enuronosyl groups at their non-reducing ends.. Functionally, pectinolytic enzymes consist of four classes of enzymes: pectin lyase, polygalacturonase, pectin methylesterase and rhamnogalacturonase. Among pectinolytic enzymes, pectin lyase is the most important in depolymerization of pectin, since it cleaves internal glycosidic bonds of highly methylated pectins. The protein is Probable pectin lyase C (pelC) of Emericella nidulans (strain FGSC A4 / ATCC 38163 / CBS 112.46 / NRRL 194 / M139) (Aspergillus nidulans).